Reading from the N-terminus, the 213-residue chain is MKAWQRQFIEFAINKQVLKFGEFTLKSGRKSPYFFNAGLFNTGRDLALLGRFYAQALVDSGIDFDLVFGPAYKGIPIATTTVVALADHYDRDVPYCFNRKEAKDHGEGGTLVGSPLQGKIMLVDDVITAGTAIRESMEIIAAHRAKLAGVLISLDRQERGSGAISAIQEVERDYGCKVISIITLNELVAYLAEKPEMADSLIAVRAYRDEFGI.

Residue Lys-26 participates in 5-phospho-alpha-D-ribose 1-diphosphate binding. Phe-34–Phe-35 contributes to the orotate binding site. 5-phospho-alpha-D-ribose 1-diphosphate contacts are provided by residues Tyr-72 to Lys-73, Arg-99, Lys-100, Lys-103, His-105, and Asp-124 to Ala-132. Residues Thr-128 and Arg-156 each contribute to the orotate site.

Belongs to the purine/pyrimidine phosphoribosyltransferase family. PyrE subfamily. Homodimer. The cofactor is Mg(2+).

It carries out the reaction orotidine 5'-phosphate + diphosphate = orotate + 5-phospho-alpha-D-ribose 1-diphosphate. Its pathway is pyrimidine metabolism; UMP biosynthesis via de novo pathway; UMP from orotate: step 1/2. Functionally, catalyzes the transfer of a ribosyl phosphate group from 5-phosphoribose 1-diphosphate to orotate, leading to the formation of orotidine monophosphate (OMP). This chain is Orotate phosphoribosyltransferase, found in Erwinia tasmaniensis (strain DSM 17950 / CFBP 7177 / CIP 109463 / NCPPB 4357 / Et1/99).